Reading from the N-terminus, the 59-residue chain is Large ribosomal subunit protein bL32c (59 aa).

The interval 1-20 is disordered; sequence MAVPKKRTSKSKKRIRKSVW.

It belongs to the bacterial ribosomal protein bL32 family.

The protein localises to the plastid. It is found in the chloroplast. This Angiopteris evecta (Mule's foot fern) protein is Large ribosomal subunit protein bL32c.